We begin with the raw amino-acid sequence, 569 residues long: Proline--tRNA ligase (569 aa).

The protein belongs to the class-II aminoacyl-tRNA synthetase family. ProS type 1 subfamily. As to quaternary structure, homodimer.

It localises to the cytoplasm. It catalyses the reaction tRNA(Pro) + L-proline + ATP = L-prolyl-tRNA(Pro) + AMP + diphosphate. Catalyzes the attachment of proline to tRNA(Pro) in a two-step reaction: proline is first activated by ATP to form Pro-AMP and then transferred to the acceptor end of tRNA(Pro). As ProRS can inadvertently accommodate and process non-cognate amino acids such as alanine and cysteine, to avoid such errors it has two additional distinct editing activities against alanine. One activity is designated as 'pretransfer' editing and involves the tRNA(Pro)-independent hydrolysis of activated Ala-AMP. The other activity is designated 'posttransfer' editing and involves deacylation of mischarged Ala-tRNA(Pro). The misacylated Cys-tRNA(Pro) is not edited by ProRS. The chain is Proline--tRNA ligase from Lactiplantibacillus plantarum (strain ATCC BAA-793 / NCIMB 8826 / WCFS1) (Lactobacillus plantarum).